Reading from the N-terminus, the 314-residue chain is uncharacterized protein (314 aa).

Positions 1–18 are cleaved as a signal peptide; the sequence is MLIQILFLIILTLNCSYS. N68, N72, N106, and N256 each carry an N-linked (GlcNAc...) asparagine glycan.

Its subcellular location is the secreted. This is an uncharacterized protein from Caenorhabditis elegans.